Consider the following 361-residue polypeptide: tRNA/tmRNA (uracil-C(5))-methyltransferase (361 aa).

Residues Gln-183, Tyr-211, Asn-216, Glu-232, and Asp-294 each coordinate S-adenosyl-L-methionine. Cys-319 (nucleophile) is an active-site residue. Glu-353 serves as the catalytic Proton acceptor.

It belongs to the class I-like SAM-binding methyltransferase superfamily. RNA M5U methyltransferase family. TrmA subfamily.

It carries out the reaction uridine(54) in tRNA + S-adenosyl-L-methionine = 5-methyluridine(54) in tRNA + S-adenosyl-L-homocysteine + H(+). The enzyme catalyses uridine(341) in tmRNA + S-adenosyl-L-methionine = 5-methyluridine(341) in tmRNA + S-adenosyl-L-homocysteine + H(+). In terms of biological role, dual-specificity methyltransferase that catalyzes the formation of 5-methyluridine at position 54 (m5U54) in all tRNAs, and that of position 341 (m5U341) in tmRNA (transfer-mRNA). The sequence is that of tRNA/tmRNA (uracil-C(5))-methyltransferase from Acinetobacter baylyi (strain ATCC 33305 / BD413 / ADP1).